We begin with the raw amino-acid sequence, 688 residues long: Transcription factor GTE9 (688 aa).

Positions Met1–Cys36 are disordered. In terms of domain architecture, Bromo spans Thr132–Leu238. One can recognise an NET domain in the interval Glu280–Lys361. Residues Gly423–Glu505 are disordered. Ser478 bears the Phosphoserine mark. Residues Gln491–Lys500 are compositionally biased toward polar residues. The tract at residues Glu505–Asp688 is transcription activation domain. A coiled-coil region spans residues Thr534–Lys613. The disordered stretch occupies residues Phe660–Asp688.

As to quaternary structure, interacts with BT1.

It is found in the nucleus. This chain is Transcription factor GTE9 (GTE9), found in Arabidopsis thaliana (Mouse-ear cress).